A 239-amino-acid polypeptide reads, in one-letter code: MATLGVNIDHIATIRQARRTVEPDPVAAAVLAELGGADGITVHLREDRRHIQDRDVQLLRQTVRTHLNLEMAATDEMVGIALDIKPDYVTLVPEKREEVTTEGGLDIVGQIARIGEVVSKLQNAAIPVSLFIDAEPAQIEASVKVQAKFIELHTGRYAEATDETSRQQELAFLATGCEQAIKAGLRVNAGHGLTYWNVYPVAALPGMEELNIGHTIISRAALVGIERAVREMKQAIRGE.

Asn7 is a 3-amino-2-oxopropyl phosphate binding site. Position 9-10 (9-10 (DH)) interacts with 1-deoxy-D-xylulose 5-phosphate. Residue Arg18 coordinates 3-amino-2-oxopropyl phosphate. His43 serves as the catalytic Proton acceptor. 1-deoxy-D-xylulose 5-phosphate is bound by residues Arg45 and His50. The active-site Proton acceptor is Glu70. Thr100 is a 1-deoxy-D-xylulose 5-phosphate binding site. Residue His191 is the Proton donor of the active site. 3-amino-2-oxopropyl phosphate-binding positions include Gly192 and 213 to 214 (GH).

It belongs to the PNP synthase family. Homooctamer; tetramer of dimers.

Its subcellular location is the cytoplasm. The enzyme catalyses 3-amino-2-oxopropyl phosphate + 1-deoxy-D-xylulose 5-phosphate = pyridoxine 5'-phosphate + phosphate + 2 H2O + H(+). It participates in cofactor biosynthesis; pyridoxine 5'-phosphate biosynthesis; pyridoxine 5'-phosphate from D-erythrose 4-phosphate: step 5/5. Functionally, catalyzes the complicated ring closure reaction between the two acyclic compounds 1-deoxy-D-xylulose-5-phosphate (DXP) and 3-amino-2-oxopropyl phosphate (1-amino-acetone-3-phosphate or AAP) to form pyridoxine 5'-phosphate (PNP) and inorganic phosphate. The protein is Pyridoxine 5'-phosphate synthase of Trichormus variabilis (strain ATCC 29413 / PCC 7937) (Anabaena variabilis).